Reading from the N-terminus, the 701-residue chain is Elongation factor G (701 aa).

Residues glycine 8–threonine 291 form the tr-type G domain. GTP is bound by residues alanine 17–threonine 24, aspartate 89–histidine 93, and asparagine 143–aspartate 146.

It belongs to the TRAFAC class translation factor GTPase superfamily. Classic translation factor GTPase family. EF-G/EF-2 subfamily.

It localises to the cytoplasm. Catalyzes the GTP-dependent ribosomal translocation step during translation elongation. During this step, the ribosome changes from the pre-translocational (PRE) to the post-translocational (POST) state as the newly formed A-site-bound peptidyl-tRNA and P-site-bound deacylated tRNA move to the P and E sites, respectively. Catalyzes the coordinated movement of the two tRNA molecules, the mRNA and conformational changes in the ribosome. The chain is Elongation factor G from Pseudomonas savastanoi pv. phaseolicola (strain 1448A / Race 6) (Pseudomonas syringae pv. phaseolicola (strain 1448A / Race 6)).